We begin with the raw amino-acid sequence, 284 residues long: Acetylglutamate kinase (284 aa).

Residues 64–65 (GG), arginine 86, and asparagine 179 contribute to the substrate site.

It belongs to the acetylglutamate kinase family. ArgB subfamily.

It is found in the cytoplasm. It catalyses the reaction N-acetyl-L-glutamate + ATP = N-acetyl-L-glutamyl 5-phosphate + ADP. The protein operates within amino-acid biosynthesis; L-arginine biosynthesis; N(2)-acetyl-L-ornithine from L-glutamate: step 2/4. In terms of biological role, catalyzes the ATP-dependent phosphorylation of N-acetyl-L-glutamate. The chain is Acetylglutamate kinase from Acaryochloris marina (strain MBIC 11017).